The chain runs to 470 residues: Uronate isomerase (470 aa).

This sequence belongs to the metallo-dependent hydrolases superfamily. Uronate isomerase family.

It carries out the reaction D-glucuronate = D-fructuronate. It catalyses the reaction aldehydo-D-galacturonate = keto-D-tagaturonate. It functions in the pathway carbohydrate metabolism; pentose and glucuronate interconversion. This chain is Uronate isomerase, found in Salmonella paratyphi A (strain ATCC 9150 / SARB42).